The primary structure comprises 741 residues: Cellulose 1,4-beta-cellobiosidase (reducing end) CelS (741 aa).

The signal sequence occupies residues 1 to 27 (MVKSRKISILLAVAMLVSIMIPTTAFA). Residue glutamate 76 participates in substrate binding. Glutamate 87 (proton donor) is an active-site residue. Residues threonine 140, asparagine 204, aspartate 241, glutamine 247, and 251 to 252 (TN) contribute to the substrate site. The active-site Nucleophile is the aspartate 255. Residues 301–302 (KY), 326–327 (WY), tyrosine 421, aspartate 520, and 645–646 (WH) contribute to the substrate site. Residues 673 to 739 (STKLYGDVND…ILKEIDTLPY (67 aa)) enclose the Dockerin domain. Residues aspartate 679, asparagine 681, aspartate 683, glycine 684, lysine 685, aspartate 690, aspartate 711, leucine 712, asparagine 713, aspartate 715, arginine 717, and aspartate 722 each contribute to the Ca(2+) site.

It belongs to the glycosyl hydrolase 48 (cellulase L) family.

It localises to the secreted. It catalyses the reaction Hydrolysis of (1-&gt;4)-beta-D-glucosidic linkages in cellulose and similar substrates, releasing cellobiose from the reducing ends of the chains.. Its activity is regulated as follows. Inhibited by cellobiose and lactose, but not by glucose. Functionally, this enzyme catalyzes the exohydrolysis of 1,4-beta-glucosidic linkages in cellulose with a preference for amorphous or crystalline cellulose over carboxymethyl cellulose. This Acetivibrio thermocellus (strain ATCC 27405 / DSM 1237 / JCM 9322 / NBRC 103400 / NCIMB 10682 / NRRL B-4536 / VPI 7372) (Clostridium thermocellum) protein is Cellulose 1,4-beta-cellobiosidase (reducing end) CelS (celS).